The following is a 152-amino-acid chain: UPF0756 membrane protein CA_C0092 (152 aa).

The next 4 helical transmembrane spans lie at 5 to 25 (IILVVILGISIVGKATSVAIS), 50 to 70 (MFWGLVLLTAAILIPIAQGNV), 82 to 102 (FVGITALVLSFLTTYLSGVGL), and 117 to 137 (LILGSVAAAAFLGGVPVGPLI).

It belongs to the UPF0756 family.

It is found in the cell membrane. The polypeptide is UPF0756 membrane protein CA_C0092 (Clostridium acetobutylicum (strain ATCC 824 / DSM 792 / JCM 1419 / IAM 19013 / LMG 5710 / NBRC 13948 / NRRL B-527 / VKM B-1787 / 2291 / W)).